The chain runs to 108 residues: UPF0251 protein PF0620 (108 aa).

The protein belongs to the UPF0251 family.

The sequence is that of UPF0251 protein PF0620 from Pyrococcus furiosus (strain ATCC 43587 / DSM 3638 / JCM 8422 / Vc1).